Here is a 221-residue protein sequence, read N- to C-terminus: H-2 class II histocompatibility antigen, A-Q alpha chain (221 aa).

Positions 1 to 76 (GIVVYQSPGD…KRSNFTPATN (76 aa)) are alpha-1. The Extracellular segment spans residues 1 to 183 (GIVVYQSPGD…IPAPMSELTE (183 aa)). The tract at residues 77–170 (EAPQATVFPK…GLDEPVLKHW (94 aa)) is alpha-2. Positions 79 to 171 (PQATVFPKSP…LDEPVLKHWE (93 aa)) constitute an Ig-like C1-type domain. Cysteine 99 and cysteine 155 form a disulfide bridge. Residue asparagine 110 is glycosylated (N-linked (GlcNAc...) asparagine). Positions 171–183 (EPEIPAPMSELTE) are connecting peptide. A helical membrane pass occupies residues 184-209 (TVVCALGLSVGLVGIVVGTIFIIQGL). Residues 210-221 (RSGGTSRPPGPL) lie on the Cytoplasmic side of the membrane.

This sequence belongs to the MHC class II family.

Its subcellular location is the membrane. This Mus musculus (Mouse) protein is H-2 class II histocompatibility antigen, A-Q alpha chain (H2-Aa).